A 505-amino-acid chain; its full sequence is Protein phosphatase 1J (505 aa).

The tract at residues 1–103 (MLNRVRSAVA…PPDTGRRLPW (103 aa)) is disordered. Positions 27–50 (DLPNAASAPPAAAPEAPRSPPAKA) are enriched in low complexity. Residues Ser-66 and Ser-76 each carry the phosphoserine modification. The region spanning 104 to 498 (STGYAEVINA…DDISVFVIPL (395 aa)) is the PPM-type phosphatase domain.

The protein belongs to the PP2C family. Interacts with UBE2I/UBC9.

It carries out the reaction O-phospho-L-seryl-[protein] + H2O = L-seryl-[protein] + phosphate. The enzyme catalyses O-phospho-L-threonyl-[protein] + H2O = L-threonyl-[protein] + phosphate. The sequence is that of Protein phosphatase 1J (PPM1J) from Homo sapiens (Human).